The chain runs to 533 residues: Calcium-dependent protein kinase 12 (533 aa).

Residues 1–77 (MGNCFTKTYE…RASGGGGEMG (77 aa)) are disordered. Residue glycine 2 is the site of N-myristoyl glycine attachment. Over residues 26–38 (ERSKARGGDEPGT) the composition is skewed to basic and acidic residues. The segment covering 57–69 (GSSSAAGALSRRA) has biased composition (low complexity). Residues 91–349 (YQLDRKLGSG…ASQALEHRWL (259 aa)) form the Protein kinase domain. ATP is bound by residues 97–105 (LGSGQFGTT) and lysine 120. The Proton acceptor role is filled by aspartate 215. Residues 354–384 (ASDRPIDSAVLSRMKQFKAMNKLKQLALKVI) are autoinhibitory domain. 4 EF-hand domains span residues 391–426 (EEIK…LGSR), 427–462 (ISEA…KHKL), 463–498 (EKEE…YGMG), and 499–533 (DEAN…GIQT). Residues aspartate 404, aspartate 406, serine 408, threonine 410, glutamate 415, aspartate 440, aspartate 442, serine 444, serine 446, glutamate 451, aspartate 476, aspartate 478, serine 480, tyrosine 482, glutamate 487, aspartate 511, aspartate 513, aspartate 515, arginine 517, and glutamate 522 each contribute to the Ca(2+) site.

Belongs to the protein kinase superfamily. Ser/Thr protein kinase family. CDPK subfamily. Expressed in roots, leaf blades and developing seeds. Expressed in vascular tissues of roots and leaf blades. Expressed in the phloem tissue of the large vascular bundle in leaf blades.

The protein localises to the membrane. It carries out the reaction L-seryl-[protein] + ATP = O-phospho-L-seryl-[protein] + ADP + H(+). The catalysed reaction is L-threonyl-[protein] + ATP = O-phospho-L-threonyl-[protein] + ADP + H(+). With respect to regulation, activated by calcium. Autophosphorylation may play an important role in the regulation of the kinase activity. May play a role in signal transduction pathways that involve calcium as a second messenger. Functions in signal transduction pathways that positively regulate responses to low-nitrogen. Functions in multiple signaling pathways, positively regulating salt tolerance and negatively modulating rice blast fungus resistance. May promote tolerance to salt stress by negatively regulating NADPH oxidase and positively regulating reactive oxygen species (ROS) scavengers. This chain is Calcium-dependent protein kinase 12, found in Oryza sativa subsp. japonica (Rice).